The sequence spans 863 residues: Receptor-like protein Cf-9 (863 aa).

Residues 1–21 (MDCVKLVFLMLYTFLCQLALS) form the signal peptide. At 22-812 (SSLPHLCPED…EEDSPMISWQ (791 aa)) the chain is on the extracellular side. The tract at residues 24-91 (LPHLCPEDQA…GVHCDETTGQ (68 aa)) is N-cap. Asn48, Asn72, Asn109, Asn127, Asn142, Asn191, Asn204, and Asn212 each carry an N-linked (GlcNAc...) asparagine glycan. One copy of the LRR 1; degenerate repeat lies at 92–115 (VIALDLRCSQLQGKFHSNSSLFQL). LRR repeat units follow at residues 116 to 139 (SNLK…KFGE) and 141 to 164 (SNLT…ICHL). One copy of the LRR 4; degenerate repeat lies at 165–191 (SKLHVLRICDQYGLSLVPYNFELLLKN). LRR repeat units lie at residues 192-214 (LTQL…SNFS), 215-238 (SHLT…VFHL), 241-263 (LQSL…KWNS), 265-287 (ASLM…SFSH), 288-312 (LTSL…LWNL), 314-335 (NIVF…FTIF), 336-358 (EKLK…LSFN), 359-382 (TQLE…ISGL), 383-406 (QNLE…IFSL), 408-428 (SLVE…EFKS), 429-452 (KTLS…LLNQ), 454-476 (NLQL…ICNL), 477-500 (KTLI…VVER), 502-524 (EYLS…TFSV), 525-549 (GNIL…MINC), 551-572 (YLTL…WLGY), 573-597 (LFQL…GNTN), 599-623 (FMGL…ILGN), 667-690 (LDSN…IIGD), 691-714 (LVGL…SFQN), 715-739 (LSVL…LASL), and 741-759 (FLEV…IPKG). N-linked (GlcNAc...) asparagine glycosylation occurs at Asn262. Asn300 and Asn311 each carry an N-linked (GlcNAc...) asparagine glycan. 3 N-linked (GlcNAc...) asparagine glycosylation sites follow: Asn378, Asn396, and Asn416. N-linked (GlcNAc...) asparagine glycosylation is present at Asn464. An N-linked (GlcNAc...) asparagine glycan is attached at Asn519. Asn563 carries an N-linked (GlcNAc...) asparagine glycan. Residues Asn698 and Asn714 are each glycosylated (N-linked (GlcNAc...) asparagine). 2 N-linked (GlcNAc...) asparagine glycosylation sites follow: Asn746 and Asn767. Residues 760-812 (KQFDSFGNTSYQGNDGLRGFPLSKLCGGEDQVTTPAELDQEEEEEDSPMISWQ) are C-cap/acidic domain. Residues 813–833 (GVLVGYGCGLVIGLSVIYIMW) traverse the membrane as a helical segment. The Cytoplasmic segment spans residues 834 to 863 (STQYPAWFSRMDLKLEHIITTKMKKHKKRY).

The protein belongs to the RLP family. In terms of assembly, interacts with thioredoxin-like protein CITRX.

The protein localises to the cell membrane. In terms of biological role, involved in plant defense. Confers resistance to the fungal pathogen C.fulvum through recognition of the AVR9 elicitor protein. The chain is Receptor-like protein Cf-9 from Solanum pimpinellifolium (Currant tomato).